The following is a 354-amino-acid chain: (R,R)-butanediol dehydrogenase (354 aa).

Positions glycine 10–valine 350 constitute an Enoyl reductase (ER) domain. Zn(2+) contacts are provided by cysteine 37, histidine 71, and glutamate 157.

Belongs to the zinc-containing alcohol dehydrogenase family. Zn(2+) is required as a cofactor.

The enzyme catalyses (R,R)-butane-2,3-diol + NAD(+) = (R)-acetoin + NADH + H(+). It carries out the reaction (S)-acetoin + NAD(+) = diacetyl + NADH + H(+). NAD-dependent butanediol dehydrogenase which catalyzes the oxidation of (R,R)-butane-2,3-diol to (3R)-acetoin and of meso-butane-2,3-diol to (3S)-acetoin. Preferentially oxidizes (R,R)-butane-2,3-diol, with a catalytic efficiency approximately fourfold higher than with meso-butane-2,3-diol. Shows a very low activity with (S,S)-butane-2,3-diol. Can also catalyze the reduction of (3R/3S)-acetoin and diacetyl in the presence of NADH. This Neisseria gonorrhoeae (strain ATCC 700825 / FA 1090) protein is (R,R)-butanediol dehydrogenase.